A 100-amino-acid polypeptide reads, in one-letter code: Small ribosomal subunit protein uS14c (100 aa).

It belongs to the universal ribosomal protein uS14 family. As to quaternary structure, part of the 30S ribosomal subunit.

The protein resides in the plastid. It is found in the chloroplast. Its function is as follows. Binds 16S rRNA, required for the assembly of 30S particles. The protein is Small ribosomal subunit protein uS14c of Populus alba (White poplar).